Reading from the N-terminus, the 242-residue chain is Ubiquinone biosynthesis O-methyltransferase (242 aa).

The S-adenosyl-L-methionine site is built by Arg44, Gly64, Asp85, and Met129.

The protein belongs to the methyltransferase superfamily. UbiG/COQ3 family.

It carries out the reaction a 3-demethylubiquinol + S-adenosyl-L-methionine = a ubiquinol + S-adenosyl-L-homocysteine + H(+). The catalysed reaction is a 3-(all-trans-polyprenyl)benzene-1,2-diol + S-adenosyl-L-methionine = a 2-methoxy-6-(all-trans-polyprenyl)phenol + S-adenosyl-L-homocysteine + H(+). It participates in cofactor biosynthesis; ubiquinone biosynthesis. Its function is as follows. O-methyltransferase that catalyzes the 2 O-methylation steps in the ubiquinone biosynthetic pathway. The chain is Ubiquinone biosynthesis O-methyltransferase from Salmonella paratyphi A (strain ATCC 9150 / SARB42).